Here is a 73-residue protein sequence, read N- to C-terminus: uncharacterized protein (73 aa).

This is an uncharacterized protein from Homo sapiens (Human).